Consider the following 105-residue polypeptide: Thioredoxin (105 aa).

A Thioredoxin domain is found at 1–105 (MVNNVTDSSF…SLLDWINKSI (105 aa)). A disulfide bridge connects residues Cys-30 and Cys-33.

It belongs to the thioredoxin family.

Its function is as follows. Component of the thioredoxin-thioredoxin reductase system. Participates in various redox reactions through the reversible oxidation of its active center dithiol to a disulfide and catalyzes dithiol-disulfide exchange reactions. This chain is Thioredoxin (trxA), found in Rickettsia prowazekii (strain Madrid E).